Consider the following 81-residue polypeptide: ATP synthase subunit c (81 aa).

The next 2 membrane-spanning stretches (helical) occupy residues 7-27 (AASVVAAGLAVGLAAIGPGIG) and 57-77 (LAFMESLTIYGLVVALVLLFA).

It belongs to the ATPase C chain family. As to quaternary structure, F-type ATPases have 2 components, F(1) - the catalytic core - and F(0) - the membrane proton channel. F(1) has five subunits: alpha(3), beta(3), gamma(1), delta(1), epsilon(1). F(0) has four main subunits: a(1), b(1), b'(1) and c(10-14). The alpha and beta chains form an alternating ring which encloses part of the gamma chain. F(1) is attached to F(0) by a central stalk formed by the gamma and epsilon chains, while a peripheral stalk is formed by the delta, b and b' chains.

The protein localises to the cellular thylakoid membrane. Its function is as follows. F(1)F(0) ATP synthase produces ATP from ADP in the presence of a proton or sodium gradient. F-type ATPases consist of two structural domains, F(1) containing the extramembraneous catalytic core and F(0) containing the membrane proton channel, linked together by a central stalk and a peripheral stalk. During catalysis, ATP synthesis in the catalytic domain of F(1) is coupled via a rotary mechanism of the central stalk subunits to proton translocation. Functionally, key component of the F(0) channel; it plays a direct role in translocation across the membrane. A homomeric c-ring of between 10-14 subunits forms the central stalk rotor element with the F(1) delta and epsilon subunits. The sequence is that of ATP synthase subunit c from Synechococcus sp. (strain CC9311).